We begin with the raw amino-acid sequence, 476 residues long: Sulfate adenylyltransferase subunit 1 (476 aa).

Residues 17 to 232 (KDLLRLLTAG…LETVHIDSDN (216 aa)) form the tr-type G domain. Positions 26 to 33 (GSVDDGKS) are G1. 26 to 33 (GSVDDGKS) is a GTP binding site. The G2 stretch occupies residues 84-88 (GITID). The interval 105–108 (DTPG) is G3. GTP-binding positions include 105 to 109 (DTPGH) and 160 to 163 (NKMD). Positions 160–163 (NKMD) are G4. Positions 197-199 (SAL) are G5.

The protein belongs to the TRAFAC class translation factor GTPase superfamily. Classic translation factor GTPase family. CysN/NodQ subfamily. Heterodimer composed of CysD, the smaller subunit, and CysN.

The enzyme catalyses sulfate + ATP + H(+) = adenosine 5'-phosphosulfate + diphosphate. The protein operates within sulfur metabolism; hydrogen sulfide biosynthesis; sulfite from sulfate: step 1/3. With CysD forms the ATP sulfurylase (ATPS) that catalyzes the adenylation of sulfate producing adenosine 5'-phosphosulfate (APS) and diphosphate, the first enzymatic step in sulfur assimilation pathway. APS synthesis involves the formation of a high-energy phosphoric-sulfuric acid anhydride bond driven by GTP hydrolysis by CysN coupled to ATP hydrolysis by CysD. This chain is Sulfate adenylyltransferase subunit 1, found in Bacteroides fragilis (strain YCH46).